Here is a 395-residue protein sequence, read N- to C-terminus: Succinyl-diaminopimelate desuccinylase (395 aa).

Zn(2+) is bound at residue His74. Asp76 is a catalytic residue. Asp107 is a binding site for Zn(2+). The Proton acceptor role is filled by Glu141. Residues Glu142, Glu170, and His368 each coordinate Zn(2+).

The protein belongs to the peptidase M20A family. DapE subfamily. In terms of assembly, homodimer. Zn(2+) serves as cofactor. Requires Co(2+) as cofactor.

The enzyme catalyses N-succinyl-(2S,6S)-2,6-diaminopimelate + H2O = (2S,6S)-2,6-diaminopimelate + succinate. The protein operates within amino-acid biosynthesis; L-lysine biosynthesis via DAP pathway; LL-2,6-diaminopimelate from (S)-tetrahydrodipicolinate (succinylase route): step 3/3. Its function is as follows. Catalyzes the hydrolysis of N-succinyl-L,L-diaminopimelic acid (SDAP), forming succinate and LL-2,6-diaminopimelate (DAP), an intermediate involved in the bacterial biosynthesis of lysine and meso-diaminopimelic acid, an essential component of bacterial cell walls. The protein is Succinyl-diaminopimelate desuccinylase of Chelativorans sp. (strain BNC1).